The chain runs to 492 residues: Probable glycine dehydrogenase (decarboxylating) subunit 2 (492 aa).

K274 carries the N6-(pyridoxal phosphate)lysine modification.

It belongs to the GcvP family. C-terminal subunit subfamily. The glycine cleavage system is composed of four proteins: P, T, L and H. In this organism, the P 'protein' is a heterodimer of two subunits. It depends on pyridoxal 5'-phosphate as a cofactor.

It catalyses the reaction N(6)-[(R)-lipoyl]-L-lysyl-[glycine-cleavage complex H protein] + glycine + H(+) = N(6)-[(R)-S(8)-aminomethyldihydrolipoyl]-L-lysyl-[glycine-cleavage complex H protein] + CO2. Its function is as follows. The glycine cleavage system catalyzes the degradation of glycine. The P protein binds the alpha-amino group of glycine through its pyridoxal phosphate cofactor; CO(2) is released and the remaining methylamine moiety is then transferred to the lipoamide cofactor of the H protein. This is Probable glycine dehydrogenase (decarboxylating) subunit 2 from Staphylococcus saprophyticus subsp. saprophyticus (strain ATCC 15305 / DSM 20229 / NCIMB 8711 / NCTC 7292 / S-41).